The primary structure comprises 347 residues: Protein RecA (347 aa).

64–71 (GPESSGKT) lines the ATP pocket.

This sequence belongs to the RecA family.

The protein localises to the cytoplasm. Its function is as follows. Can catalyze the hydrolysis of ATP in the presence of single-stranded DNA, the ATP-dependent uptake of single-stranded DNA by duplex DNA, and the ATP-dependent hybridization of homologous single-stranded DNAs. It interacts with LexA causing its activation and leading to its autocatalytic cleavage. The sequence is that of Protein RecA from Bacillus velezensis (strain DSM 23117 / BGSC 10A6 / LMG 26770 / FZB42) (Bacillus amyloliquefaciens subsp. plantarum).